A 354-amino-acid chain; its full sequence is E2F transcription factor-like E2FF (354 aa).

A DNA-binding region spans residues 21-86 (RKEKSLGVLV…RGKNQYSWKG (66 aa)). Residues 104–143 (ERLGYSSSNNSDKVSNGCEREEPLTLTPDDQENSSSSKMD) are disordered. The segment covering 108–117 (YSSSNNSDKV) has biased composition (polar residues). The DNA-binding element occupies 145–225 (KKEKSLWLLA…TRKPAYRWLG (81 aa)).

This sequence belongs to the E2F/DP family. As to expression, high expression in young cotyledons and leaves, hypocotyls, shoot apical meristem, roots and mature pollen grains, moderate in developing trichomes, flowers and at early stages of developing anthers, and barely detectable in mature leaves. Not detected in primary root meristem, emerging lateral roots, pistils, developing embryos and siliques.

It is found in the nucleus. The protein localises to the cytoplasm. Functionally, inhibitor of E2F-dependent activation of gene expression. Binds specifically the E2 recognition site without interacting with DP proteins and prevents transcription activation by E2F/DP heterodimers. Does not bind retinoblastoma-related proteins. Acts as a growth regulator but is not associated with changes in the expression of cell cycle marker genes or in nuclear ploidy levels. Has no effect on cell proliferation, but may repress cell wall biosynthesis genes during cell elongation in differentiated cells. The protein is E2F transcription factor-like E2FF (E2FF) of Arabidopsis thaliana (Mouse-ear cress).